The chain runs to 455 residues: UDP-N-acetylmuramoylalanine--D-glutamate ligase (455 aa).

120 to 126 serves as a coordination point for ATP; sequence GSNGKTT.

This sequence belongs to the MurCDEF family.

The protein localises to the cytoplasm. The enzyme catalyses UDP-N-acetyl-alpha-D-muramoyl-L-alanine + D-glutamate + ATP = UDP-N-acetyl-alpha-D-muramoyl-L-alanyl-D-glutamate + ADP + phosphate + H(+). It functions in the pathway cell wall biogenesis; peptidoglycan biosynthesis. Functionally, cell wall formation. Catalyzes the addition of glutamate to the nucleotide precursor UDP-N-acetylmuramoyl-L-alanine (UMA). In Pediococcus pentosaceus (strain ATCC 25745 / CCUG 21536 / LMG 10740 / 183-1w), this protein is UDP-N-acetylmuramoylalanine--D-glutamate ligase.